The following is a 115-amino-acid chain: Large ribosomal subunit protein bL19 (115 aa).

This sequence belongs to the bacterial ribosomal protein bL19 family.

In terms of biological role, this protein is located at the 30S-50S ribosomal subunit interface and may play a role in the structure and function of the aminoacyl-tRNA binding site. This chain is Large ribosomal subunit protein bL19, found in Streptococcus mutans serotype c (strain ATCC 700610 / UA159).